A 464-amino-acid chain; its full sequence is Glycine--tRNA ligase (464 aa).

Substrate is bound by residues Arg-104 and Glu-175. Residues Arg-207–Glu-209, Phe-217–Phe-222, Glu-292–Leu-293, and Gly-336–Arg-339 each bind ATP. Phe-222–Glu-226 provides a ligand contact to substrate. Glu-332–Gly-336 serves as a coordination point for substrate.

The protein belongs to the class-II aminoacyl-tRNA synthetase family. As to quaternary structure, homodimer.

The protein resides in the cytoplasm. The enzyme catalyses tRNA(Gly) + glycine + ATP = glycyl-tRNA(Gly) + AMP + diphosphate. In terms of biological role, catalyzes the attachment of glycine to tRNA(Gly). The protein is Glycine--tRNA ligase of Leptospira borgpetersenii serovar Hardjo-bovis (strain JB197).